Consider the following 509-residue polypeptide: ATP synthase subunit alpha (509 aa).

169-176 (GDRQTGKT) is an ATP binding site.

Belongs to the ATPase alpha/beta chains family. In terms of assembly, F-type ATPases have 2 components, CF(1) - the catalytic core - and CF(0) - the membrane proton channel. CF(1) has five subunits: alpha(3), beta(3), gamma(1), delta(1), epsilon(1). CF(0) has three main subunits: a(1), b(2) and c(9-12). The alpha and beta chains form an alternating ring which encloses part of the gamma chain. CF(1) is attached to CF(0) by a central stalk formed by the gamma and epsilon chains, while a peripheral stalk is formed by the delta and b chains.

Its subcellular location is the cell inner membrane. It carries out the reaction ATP + H2O + 4 H(+)(in) = ADP + phosphate + 5 H(+)(out). Functionally, produces ATP from ADP in the presence of a proton gradient across the membrane. The alpha chain is a regulatory subunit. In Methylobacterium sp. (strain 4-46), this protein is ATP synthase subunit alpha.